A 220-amino-acid chain; its full sequence is NADH-quinone oxidoreductase subunit I (220 aa).

4Fe-4S ferredoxin-type domains lie at 71–102 and 112–141; these read LQRL…IITH and DSYT…MGNR. The [4Fe-4S] cluster site is built by cysteine 82, cysteine 85, cysteine 88, cysteine 92, cysteine 121, cysteine 124, cysteine 127, and cysteine 131. Residues 189–220 are disordered; it reads ATPLDYVQEPSKEESKKETPTSPEANKGDENV. The span at 198-207 shows a compositional bias: basic and acidic residues; it reads PSKEESKKET.

The protein belongs to the complex I 23 kDa subunit family. In terms of assembly, NDH-1 is composed of 14 different subunits. Subunits NuoA, H, J, K, L, M, N constitute the membrane sector of the complex. [4Fe-4S] cluster is required as a cofactor.

The protein resides in the cell inner membrane. The enzyme catalyses a quinone + NADH + 5 H(+)(in) = a quinol + NAD(+) + 4 H(+)(out). In terms of biological role, NDH-1 shuttles electrons from NADH, via FMN and iron-sulfur (Fe-S) centers, to quinones in the respiratory chain. The immediate electron acceptor for the enzyme in this species is believed to be ubiquinone. Couples the redox reaction to proton translocation (for every two electrons transferred, four hydrogen ions are translocated across the cytoplasmic membrane), and thus conserves the redox energy in a proton gradient. The chain is NADH-quinone oxidoreductase subunit I from Helicobacter acinonychis (strain Sheeba).